Reading from the N-terminus, the 194-residue chain is Peptidyl-tRNA hydrolase (194 aa).

Y16 lines the tRNA pocket. H21 functions as the Proton acceptor in the catalytic mechanism. Positions 67, 69, and 115 each coordinate tRNA.

This sequence belongs to the PTH family. As to quaternary structure, monomer.

The protein resides in the cytoplasm. The catalysed reaction is an N-acyl-L-alpha-aminoacyl-tRNA + H2O = an N-acyl-L-amino acid + a tRNA + H(+). In terms of biological role, hydrolyzes ribosome-free peptidyl-tRNAs (with 1 or more amino acids incorporated), which drop off the ribosome during protein synthesis, or as a result of ribosome stalling. Functionally, catalyzes the release of premature peptidyl moieties from peptidyl-tRNA molecules trapped in stalled 50S ribosomal subunits, and thus maintains levels of free tRNAs and 50S ribosomes. This Colwellia psychrerythraea (strain 34H / ATCC BAA-681) (Vibrio psychroerythus) protein is Peptidyl-tRNA hydrolase.